The primary structure comprises 454 residues: tRNA modification GTPase MnmE (454 aa).

Positions 23, 80, and 120 each coordinate (6S)-5-formyl-5,6,7,8-tetrahydrofolate. The region spanning 216 to 377 (GMKVVIAGRP…LRNNLKQSMG (162 aa)) is the TrmE-type G domain. Residue Asn-226 participates in K(+) binding. GTP is bound by residues 226-231 (NAGKSS), 245-251 (TDIAGTT), 270-273 (DTAG), 335-338 (NKAD), and 358-360 (SAR). Residue Ser-230 participates in Mg(2+) binding. Residues Thr-245, Ile-247, and Thr-250 each coordinate K(+). Thr-251 is a Mg(2+) binding site. Lys-454 is a binding site for (6S)-5-formyl-5,6,7,8-tetrahydrofolate.

The protein belongs to the TRAFAC class TrmE-Era-EngA-EngB-Septin-like GTPase superfamily. TrmE GTPase family. As to quaternary structure, homodimer. Heterotetramer of two MnmE and two MnmG subunits. Requires K(+) as cofactor.

The protein resides in the cytoplasm. Exhibits a very high intrinsic GTPase hydrolysis rate. Involved in the addition of a carboxymethylaminomethyl (cmnm) group at the wobble position (U34) of certain tRNAs, forming tRNA-cmnm(5)s(2)U34. The polypeptide is tRNA modification GTPase MnmE (Salmonella paratyphi A (strain ATCC 9150 / SARB42)).